A 579-amino-acid chain; its full sequence is Zinc finger protein 248 (579 aa).

The KRAB domain occupies 8–79 (VSFKDVCVDF…EKGFPSQCHP (72 aa)). The C2H2-type 1; degenerate zinc finger occupies 240–264 (TVCKYNECGRTFIESLKLNISQRPH). Lysine 341 is covalently cross-linked (Glycyl lysine isopeptide (Lys-Gly) (interchain with G-Cter in SUMO2)). 7 consecutive C2H2-type zinc fingers follow at residues 380 to 402 (FECG…QRTH), 408 to 430 (YECT…QRTH), 436 to 458 (YECK…QRTH), 464 to 486 (YECN…QRTH), 492 to 514 (FICN…QRTH), 520 to 543 (YKCN…RTHT), and 548 to 570 (YECN…QRIH).

The protein belongs to the krueppel C2H2-type zinc-finger protein family.

The protein resides in the nucleus. Its function is as follows. May be involved in transcriptional regulation. The polypeptide is Zinc finger protein 248 (ZNF248) (Homo sapiens (Human)).